Reading from the N-terminus, the 992-residue chain is Translation initiation factor IF-2 (992 aa).

Disordered stretches follow at residues arginine 154–alanine 173 and alanine 338–serine 399. A tr-type G domain is found at proline 492–lysine 661. Residues glycine 501–threonine 508 are G1. Glycine 501–threonine 508 contacts GTP. The interval glycine 526–histidine 530 is G2. The segment at aspartate 547 to glycine 550 is G3. Residues aspartate 547–histidine 551 and asparagine 601–aspartate 604 contribute to the GTP site. Residues asparagine 601–aspartate 604 form a G4 region. Residues serine 637–histidine 639 form a G5 region.

The protein belongs to the TRAFAC class translation factor GTPase superfamily. Classic translation factor GTPase family. IF-2 subfamily.

The protein localises to the cytoplasm. In terms of biological role, one of the essential components for the initiation of protein synthesis. Protects formylmethionyl-tRNA from spontaneous hydrolysis and promotes its binding to the 30S ribosomal subunits. Also involved in the hydrolysis of GTP during the formation of the 70S ribosomal complex. The polypeptide is Translation initiation factor IF-2 (Polaromonas naphthalenivorans (strain CJ2)).